We begin with the raw amino-acid sequence, 112 residues long: Protein AV2 (112 aa).

It belongs to the geminiviridae protein AV2/V2 family. In terms of assembly, interacts with host SGS3.

It is found in the host cytoplasm. It localises to the host perinuclear region. Its function is as follows. Through its interaction with host SGS3, acts as a suppressor of RNA-mediated gene silencing, also known as post-transcriptional gene silencing (PTGS), a mechanism of plant viral defense that limits the accumulation of viral RNAs. The protein is Protein AV2 of Indian cassava mosaic virus (ICMV).